Consider the following 75-residue polypeptide: Peptide Ctri10036 (75 aa).

The signal sequence occupies residues 1–22; that stretch reads MNSKYLFVFLILNVIFIDLCQG. Lys41 carries the lysine amide modification. Residues 47-75 constitute a propeptide that is removed on maturation; the sequence is ELGSQYDYLQDFRKRELDLDDLLSKFPDY.

This sequence belongs to the non-disulfide-bridged peptide (NDBP) superfamily. Short antimicrobial peptide (group 4) family. In terms of tissue distribution, expressed by the venom gland.

Its subcellular location is the secreted. This is Peptide Ctri10036 from Chaerilus tricostatus (Scorpion).